Consider the following 635-residue polypeptide: Very-long-chain aldehyde decarbonylase GL1-6 (635 aa).

A run of 4 helical transmembrane segments spans residues 46 to 66 (LLNF…QLWI), 100 to 120 (IILT…AQVA), 127 to 147 (GMVV…YWLH), and 183 to 203 (VVYF…GTVS). A Fatty acid hydroxylase domain is found at 139 to 273 (VEFLYYWLHR…MPVYDYIYGT (135 aa)).

It belongs to the sterol desaturase family. Homodimer. In terms of tissue distribution, expressed in germinating seeds and shoots.

It is found in the endoplasmic reticulum membrane. It carries out the reaction a long-chain fatty aldehyde + 2 NADPH + O2 + H(+) = a long-chain alkane + formate + 2 NADP(+) + H2O. Functionally, aldehyde decarbonylase involved in the conversion of aldehydes to alkanes. Core component of a very-long-chain alkane synthesis complex. The sequence is that of Very-long-chain aldehyde decarbonylase GL1-6 from Oryza sativa subsp. japonica (Rice).